A 401-amino-acid chain; its full sequence is Formate dehydrogenase (401 aa).

The substrate site is built by Ile123 and Asn147. NAD(+) is bound by residues Ser148, 202–203 (RI), Asp222, 257–261 (PLHPE), Thr283, Asp309, 333–336 (HISG), and Ser381.

Belongs to the D-isomer specific 2-hydroxyacid dehydrogenase family. FDH subfamily. In terms of assembly, homodimer.

The protein localises to the cytoplasm. The catalysed reaction is formate + NAD(+) = CO2 + NADH. In terms of biological role, catalyzes the NAD(+)-dependent oxidation of formate to carbon dioxide. Formate oxidation is the final step in the methanol oxidation pathway in methylotrophic microorganisms. Has a role in the detoxification of exogenous formate in non-methylotrophic organisms. The chain is Formate dehydrogenase from Pseudomonas sp. (strain 101) (Achromobacter parvulus T1).